The chain runs to 539 residues: CTP synthase (539 aa).

Residues 1 to 269 form an amidoligase domain region; the sequence is MSATKYIFVT…DERVLSKLKL (269 aa). Serine 15 is a CTP binding site. Residue serine 15 coordinates UTP. 16-21 is a binding site for ATP; that stretch reads SLGKGI. Tyrosine 56 lines the L-glutamine pocket. Aspartate 73 lines the ATP pocket. Mg(2+)-binding residues include aspartate 73 and glutamate 143. CTP contacts are provided by residues 150-152, 190-195, and lysine 226; these read DIE and KTKPTQ. UTP contacts are provided by residues 190 to 195 and lysine 226; that span reads KTKPTQ. In terms of domain architecture, Glutamine amidotransferase type-1 spans 295 to 537; that stretch reads NIALVGKYVE…VKAANDFAKG (243 aa). Glycine 357 contacts L-glutamine. Cysteine 384 functions as the Nucleophile; for glutamine hydrolysis in the catalytic mechanism. Residues 385-388, glutamate 408, and arginine 465 contribute to the L-glutamine site; that span reads LGMQ. Catalysis depends on residues histidine 510 and glutamate 512.

This sequence belongs to the CTP synthase family. As to quaternary structure, homotetramer.

The enzyme catalyses UTP + L-glutamine + ATP + H2O = CTP + L-glutamate + ADP + phosphate + 2 H(+). It catalyses the reaction L-glutamine + H2O = L-glutamate + NH4(+). It carries out the reaction UTP + NH4(+) + ATP = CTP + ADP + phosphate + 2 H(+). It functions in the pathway pyrimidine metabolism; CTP biosynthesis via de novo pathway; CTP from UDP: step 2/2. With respect to regulation, allosterically activated by GTP, when glutamine is the substrate; GTP has no effect on the reaction when ammonia is the substrate. The allosteric effector GTP functions by stabilizing the protein conformation that binds the tetrahedral intermediate(s) formed during glutamine hydrolysis. Inhibited by the product CTP, via allosteric rather than competitive inhibition. Catalyzes the ATP-dependent amination of UTP to CTP with either L-glutamine or ammonia as the source of nitrogen. Regulates intracellular CTP levels through interactions with the four ribonucleotide triphosphates. The chain is CTP synthase from Cytophaga hutchinsonii (strain ATCC 33406 / DSM 1761 / CIP 103989 / NBRC 15051 / NCIMB 9469 / D465).